The chain runs to 194 residues: Ferredoxin, apicoplast (194 aa).

The N-terminal 19 residues, 1–19 (MNIVILLLILTFSIKHSNT), are a transit peptide targeting the apicoplast. One can recognise a 2Fe-2S ferredoxin-type domain in the interval 99–189 (YNITLRTNDG…DCVIETHKED (91 aa)). [2Fe-2S] cluster contacts are provided by cysteine 135, cysteine 140, cysteine 143, and cysteine 173.

This sequence belongs to the 2Fe2S plant-type ferredoxin family. The cofactor is [2Fe-2S] cluster.

Its subcellular location is the plastid. The protein resides in the apicoplast. In terms of biological role, ferredoxins are iron-sulfur proteins that transfer electrons in a wide variety of metabolic reactions. By transferring electrons to 4-hydroxy-3-methylbut-2-enyl diphosphate reductase LytB/IspH, plays a role in the terminal step of the DOXP/MEP pathway for isoprenoid precursor biosynthesis. This chain is Ferredoxin, apicoplast, found in Plasmodium falciparum (isolate 3D7).